A 355-amino-acid polypeptide reads, in one-letter code: Ubiquinone biosynthesis protein COQ4 homolog, mitochondrial (355 aa).

4 residues coordinate Zn(2+): H134, D135, H138, and E150.

It belongs to the COQ4 family. As to quaternary structure, component of a multi-subunit COQ enzyme complex. It depends on Zn(2+) as a cofactor.

Its subcellular location is the mitochondrion inner membrane. The enzyme catalyses a 4-hydroxy-3-methoxy-5-(all-trans-polyprenyl)benzoate + H(+) = a 2-methoxy-6-(all-trans-polyprenyl)phenol + CO2. The protein operates within cofactor biosynthesis; ubiquinone biosynthesis. Its function is as follows. Lyase that catalyzes the C1-decarboxylation of 4-hydroxy-3-methoxy-5-(all-trans-polyprenyl)benzoic acid into 2-methoxy-6-(all-trans-polyprenyl)phenol during ubiquinone biosynthesis. The polypeptide is Ubiquinone biosynthesis protein COQ4 homolog, mitochondrial (Plasmodium yoelii yoelii).